Consider the following 296-residue polypeptide: Phosphatidylserine decarboxylase proenzyme (296 aa).

Residues D100, H157, and S263 each act as charge relay system; for autoendoproteolytic cleavage activity in the active site. The Schiff-base intermediate with substrate; via pyruvic acid; for decarboxylase activity role is filled by S263. Pyruvic acid (Ser); by autocatalysis is present on S263.

The protein belongs to the phosphatidylserine decarboxylase family. PSD-B subfamily. Prokaryotic type I sub-subfamily. Heterodimer of a large membrane-associated beta subunit and a small pyruvoyl-containing alpha subunit. The cofactor is pyruvate. Is synthesized initially as an inactive proenzyme. Formation of the active enzyme involves a self-maturation process in which the active site pyruvoyl group is generated from an internal serine residue via an autocatalytic post-translational modification. Two non-identical subunits are generated from the proenzyme in this reaction, and the pyruvate is formed at the N-terminus of the alpha chain, which is derived from the carboxyl end of the proenzyme. The autoendoproteolytic cleavage occurs by a canonical serine protease mechanism, in which the side chain hydroxyl group of the serine supplies its oxygen atom to form the C-terminus of the beta chain, while the remainder of the serine residue undergoes an oxidative deamination to produce ammonia and the pyruvoyl prosthetic group on the alpha chain. During this reaction, the Ser that is part of the protease active site of the proenzyme becomes the pyruvoyl prosthetic group, which constitutes an essential element of the active site of the mature decarboxylase.

It localises to the cell membrane. The enzyme catalyses a 1,2-diacyl-sn-glycero-3-phospho-L-serine + H(+) = a 1,2-diacyl-sn-glycero-3-phosphoethanolamine + CO2. It participates in phospholipid metabolism; phosphatidylethanolamine biosynthesis; phosphatidylethanolamine from CDP-diacylglycerol: step 2/2. In terms of biological role, catalyzes the formation of phosphatidylethanolamine (PtdEtn) from phosphatidylserine (PtdSer). In Actinobacillus pleuropneumoniae serotype 7 (strain AP76), this protein is Phosphatidylserine decarboxylase proenzyme.